The chain runs to 63 residues: Potassium channel toxin Sp4 (63 aa).

Positions 1–20 (MNKVHFALFLLVLTVLAVSG) are cleaved as a signal peptide. 3 disulfides stabilise this stretch: cysteine 31–cysteine 53, cysteine 38–cysteine 58, and cysteine 42–cysteine 60.

The protein belongs to the long chain scorpion toxin family. Class 2 subfamily. Expressed by the venom gland.

It localises to the secreted. This recombinant toxin selectively inhibits mouse voltage-gated potassium channel Kv1.3/KCNA3 (IC(50)=24.73 nM). This is Potassium channel toxin Sp4 from Scorpiops pococki (Scorpion).